Consider the following 224-residue polypeptide: Probable octanoyltransferase (224 aa).

The BPL/LPL catalytic domain maps to 28–199 (GLTGDIALVT…KLALELGLTP (172 aa)). Residues 66-73 (RGGDATYH), 130-132 (SIG), and 143-145 (GVA) contribute to the substrate site. Cys-161 functions as the Acyl-thioester intermediate in the catalytic mechanism.

The protein belongs to the LipB family.

It is found in the cytoplasm. The enzyme catalyses octanoyl-[ACP] + L-lysyl-[protein] = N(6)-octanoyl-L-lysyl-[protein] + holo-[ACP] + H(+). The protein operates within protein modification; protein lipoylation via endogenous pathway; protein N(6)-(lipoyl)lysine from octanoyl-[acyl-carrier-protein]: step 1/2. In terms of biological role, catalyzes the transfer of endogenously produced octanoic acid from octanoyl-acyl-carrier-protein onto the lipoyl domains of lipoate-dependent enzymes. Lipoyl-ACP can also act as a substrate although octanoyl-ACP is likely to be the physiological substrate. The sequence is that of Probable octanoyltransferase from Pyrobaculum aerophilum (strain ATCC 51768 / DSM 7523 / JCM 9630 / CIP 104966 / NBRC 100827 / IM2).